Consider the following 229-residue polypeptide: Complex I assembly factor TMEM126B, mitochondrial (229 aa).

Helical transmembrane passes span 71–91 (IRGTLFFGVSSSLSGVMANLV), 109–129 (LTTLPFVATAVTYKLFVTDAL), 140–160 (VLRSSLIGVACGVSYPSALAF), and 198–218 (VPLLFQIIFGVFNGLYHYAVC).

As to quaternary structure, part of the mitochondrial complex I assembly/MCIA complex that comprises at least the core subunits TMEM126B, NDUFAF1, ECSIT and ACAD9 and complement subunits such as COA1 and TMEM186. Associates with the intermediate 370 kDa subcomplex of incompletely assembled complex I. Interacts with TMEM70.

It localises to the mitochondrion membrane. Functionally, as part of the MCIA complex, involved in the assembly of the mitochondrial complex I. Participates in constructing the membrane arm of complex I. The polypeptide is Complex I assembly factor TMEM126B, mitochondrial (Rattus norvegicus (Rat)).